The following is a 114-amino-acid chain: Protein ORF3 (114 aa).

The membrane association stretch occupies residues 1-28 (MGSRPCALGLFCCCSSCFCLCCPRHRPV). Hydrophobic regions lie at residues 6-22 (CALG…CLCC) and 33-53 (AAVG…GLIL). The interval 6 to 22 (CALGLFCCCSSCFCLCC) is induction of host SIRPA expression. Positions 28–68 (VSRLAAAVGGAAAVPAVVSGVTGLILSPSQSPIFIQPTPSP) are interaction with host HPX. An interaction with the capsid protein region spans residues 48–72 (VTGLILSPSQSPIFIQPTPSPPMSP). At serine 71 the chain carries Phosphoserine; by host. The tract at residues 72 to 114 (PLRPGLDLVFANPPDHSAPLGVTRPSAPPLPHVVDLPQLGPRR) is homodimerization, and interaction with host AMBP/bikunin. Residues 91–114 (LGVTRPSAPPLPHVVDLPQLGPRR) form a disordered region. Residues 95–104 (RPSAPPLPHV) are interaction with host SRC, HCK, FYN, PIK3R3 and GRB2. The short motif at 96–99 (PSAP) is the PTAP/PSAP motif element.

Belongs to the hepevirus ORF3 protein family. As to quaternary structure, forms homooligomers. Interacts with host SRC, HCK, FYN, PIK3R3 and GRB2 (via SH3 domain); binding does not activate the kinases. Interacts with host AMBP/bikunin and AMBP/alpha-1-microglobulin peptides. Interacts with host HPX/hemopexin. Interacts (when phosphorylated) with capsid protein ORF2. Interacts with host TSG101; this interaction plays a role in viral release from the host cell. Interacts with host SIRPA; this interaction down-regulates the phosphorylation of host IRF3. Palmitoylated in the N-terminus.

It is found in the host endoplasmic reticulum membrane. It localises to the host cytoplasm. The protein localises to the host cytoskeleton. The protein resides in the virion. Its subcellular location is the host cell membrane. Small multifunctional phosphoprotein involved in virion morphogenesis, egress and counteracting host innate immunity. Plays critical roles in the final steps of viral release by interacting with host TSG101, a member of the vacuolar protein-sorting pathway and using other cellular host proteins involved in vesicle formation pathway. Also acts as a viroporin and forms ion conductive pores allowing viral particle release. Impairs the generation of type I interferon by down-regulating host TLR3 and TLR7 as well as their downstream signaling pathways. Down-regulates the phosphorylation of host IRF3 via the interaction with host SIRP-alpha, thereby inhibiting IFN-I expression. Interacts with host microtubules. This chain is Protein ORF3, found in Hepatitis E virus genotype 1 (isolate Human/China/HeBei/1987) (HEV).